A 462-amino-acid polypeptide reads, in one-letter code: Cysteine--tRNA ligase (462 aa).

Cysteine 28 contributes to the Zn(2+) binding site. The 'HIGH' region signature appears at 30–40 (MTVYDYCHIGH). Positions 209, 234, and 238 each coordinate Zn(2+). The 'KMSKS' region motif lies at 266–270 (KMSKS). Position 269 (lysine 269) interacts with ATP.

The protein belongs to the class-I aminoacyl-tRNA synthetase family. As to quaternary structure, monomer. Zn(2+) is required as a cofactor.

The protein localises to the cytoplasm. It catalyses the reaction tRNA(Cys) + L-cysteine + ATP = L-cysteinyl-tRNA(Cys) + AMP + diphosphate. This chain is Cysteine--tRNA ligase, found in Pseudomonas fluorescens (strain SBW25).